Here is a 178-residue protein sequence, read N- to C-terminus: ATP synthase subunit delta (178 aa).

Belongs to the ATPase delta chain family. In terms of assembly, F-type ATPases have 2 components, F(1) - the catalytic core - and F(0) - the membrane proton channel. F(1) has five subunits: alpha(3), beta(3), gamma(1), delta(1), epsilon(1). F(0) has three main subunits: a(1), b(2) and c(10-14). The alpha and beta chains form an alternating ring which encloses part of the gamma chain. F(1) is attached to F(0) by a central stalk formed by the gamma and epsilon chains, while a peripheral stalk is formed by the delta and b chains.

The protein localises to the cell inner membrane. Functionally, f(1)F(0) ATP synthase produces ATP from ADP in the presence of a proton or sodium gradient. F-type ATPases consist of two structural domains, F(1) containing the extramembraneous catalytic core and F(0) containing the membrane proton channel, linked together by a central stalk and a peripheral stalk. During catalysis, ATP synthesis in the catalytic domain of F(1) is coupled via a rotary mechanism of the central stalk subunits to proton translocation. This protein is part of the stalk that links CF(0) to CF(1). It either transmits conformational changes from CF(0) to CF(1) or is implicated in proton conduction. This is ATP synthase subunit delta from Cellvibrio japonicus (strain Ueda107) (Pseudomonas fluorescens subsp. cellulosa).